Consider the following 229-residue polypeptide: Nectarin-1 (229 aa).

The N-terminal stretch at 1–32 is a signal peptide; it reads MAAFGIKSKIFQIMEMTILFLFAISIDRYCFA. Cys-42 and Cys-57 are oxidised to a cystine. An N-linked (GlcNAc...) asparagine glycan is attached at Asn-60. A Cupin type-1 domain is found at 69 to 217; sequence FAISKPGATN…TFQINIEDVQ (149 aa). Mn(2+)-binding residues include His-117, His-119, Glu-124, and His-163.

Belongs to the germin family. In terms of assembly, monomer. In the absence of manganese, it forms tetrameric and pentameric forms which show superoxide dismutase activity. It depends on Mn(2+) as a cofactor. In terms of processing, glycosylated.

It is found in the secreted. It localises to the extracellular space. Its subcellular location is the apoplast. The catalysed reaction is 2 superoxide + 2 H(+) = H2O2 + O2. May interact with bacterial adhesins thereby protecting the reproductive tissues from microbial attack. Has no oxalate oxidase activity. The chain is Nectarin-1 (NEC1) from Nicotiana plumbaginifolia (Leadwort-leaved tobacco).